The primary structure comprises 146 residues: Large ribosomal subunit protein eL32 (146 aa).

This sequence belongs to the eukaryotic ribosomal protein eL32 family.

The chain is Large ribosomal subunit protein eL32 (rpl32e) from Methanocaldococcus jannaschii (strain ATCC 43067 / DSM 2661 / JAL-1 / JCM 10045 / NBRC 100440) (Methanococcus jannaschii).